Here is a 163-residue protein sequence, read N- to C-terminus: CASP-like protein 1C2 (163 aa).

Topologically, residues 1-6 (MAKSNK) are cytoplasmic. The chain crosses the membrane as a helical span at residues 7–27 (IFTNTLRLLALAATVVAIVFM). The Extracellular segment spans residues 28-52 (VTSHDSAQVLNLTFTAKYSNTPAFK). Residue asparagine 38 is glycosylated (N-linked (GlcNAc...) asparagine). A helical transmembrane segment spans residues 53–73 (FLVIGEAIAGGYTVISILLSF). The Cytoplasmic segment spans residues 74 to 79 (KGLFWR). Residues 80-100 (LIVILDMVTTVLLTSSISAAL) form a helical membrane-spanning segment. Residues 101–128 (AIAQVGKKGNTHAGWLPICGQVPDFCDY) lie on the Extracellular side of the membrane. Residues 129 to 149 (VTIALIAGFAAAIIYFVLLLC) traverse the membrane as a helical segment. Topologically, residues 150–163 (SLYVVLSPIFVATP) are cytoplasmic.

This sequence belongs to the Casparian strip membrane proteins (CASP) family. Homodimer and heterodimers.

Its subcellular location is the cell membrane. The chain is CASP-like protein 1C2 from Populus trichocarpa (Western balsam poplar).